A 554-amino-acid chain; its full sequence is Putative F-box/LRR-repeat protein 8 (554 aa).

An F-box domain is found at 71-117; sequence YDYISNLPDECLSLIFQSLTCADLKRCSLVCRRWLTIEGQCRHRLSL. LRR repeat units lie at residues 119-144, 148-173, 174-199, 205-224, 250-275, 301-325, 326-351, 354-379, 383-404, 405-428, 430-455, and 456-480; these read AQSD…VLRS, SLGI…KLRG, CPEI…SFGS, KGMN…SVKR, KELH…KIFR, RIQM…HLVK, TPDC…HIDG, TNRI…VLIG, TKLS…ALCG, SDTV…KLCI, NCPI…KVKK, and CRGV…NLDA.

This chain is Putative F-box/LRR-repeat protein 8 (FBL8), found in Arabidopsis thaliana (Mouse-ear cress).